Here is a 703-residue protein sequence, read N- to C-terminus: Phenylalanine aminomutase (L-beta-phenylalanine forming) (703 aa).

Catalysis depends on Tyr79, which acts as the Proton donor/acceptor. The segment at residues 177-179 (ASG) is a cross-link (5-imidazolinone (Ala-Gly)). Position 178 is a 2,3-didehydroalanine (Ser) (Ser178).

This sequence belongs to the PAL/histidase family. Post-translationally, contains an active site 4-methylidene-imidazol-5-one (MIO), which is formed autocatalytically by cyclization and dehydration of residues Ala-Ser-Gly.

It carries out the reaction L-phenylalanine = L-beta-phenylalanine. The protein operates within mycotoxin biosynthesis. Phenylalanine aminomutase; part of the gene cluster that mediates the biosynthesis of the mycotoxin cyclochlorotine, a hepatotoxic and carcinogenic cyclic chlorinated pentapeptide. Within the pathway, cctP1 provides the uncommon building block beta-Phe from Phe. The NRPS cctN initially catalyzes the condensation of L-serine (Ser), Pro, L-2-aminobutyrate (2Abu), Ser, and beta-Phe in this order to produce isocyclotine. After the dichlorination of Pro2 catalyzed by cctP2 to produce isocyclochlorotine, the cctO-mediated transacylation of isocyclochlorotine can furnish cyclochlorotine. The subsequent hydroxylation of cyclochlorotine by cctR yields hydroxycyclochlorotine as the final product. CctP1 probably acts as a phenylalanine aminomutase and provides the uncommon building block beta-Phe. Furthermore, 2Abu can be synthesized from threonine by one of the threonine dehydratases and transaminases localized outside of the cluster. The functions of the remaining proteins encoded by the cluster, cctM and cctT, have not been identified yet. In Talaromyces islandicus (Penicillium islandicum), this protein is Phenylalanine aminomutase (L-beta-phenylalanine forming).